A 551-amino-acid chain; its full sequence is MPYNPLYESLSNQFDPSRIETVLDPMGYTIKRRALPVSLTIAGSDCSGGAGIQADLKTMTSLGVYGMSAITCLVAENAGGVDSVEEMSPAFVESQIDCCIRDIPCHVVKTGMLGSPEIVKAVARSAKKFNFSKLVVDPVMVATSGDSLVTKDIVSVLNEELLPLTYLVTPNIPEAIVLAKNQGLDISNINSVSDMERCAAVIHKLGPKHVLLKGGHMPVNNLGLKSSDDEDLRVVDILYDGNRFYHFSSSYLKKGEVHGTGCTLSSAIASFLAWEHSLTEAVQFGIDYVHGAITHSPPINNCSTNILNHMTRLRIVPFAPGHFIEYILSHPQVVPAWKEYINHKFTNMLAKGTLPLPAFQDYLKQDYLYLVNFARAYSLKGYKENTFPNILEAAQSVIHVIEEKELHVSMCSSYGVSLQDLKSCEESPACTAYSRYILDTGAAQDVAALDFVQAPCLIGYYVIAARLMKEPFRNPQGPYQKWVDNYFCEDYLSAVRRGCRQIEEIVLKLSPERIQELIEIFIRATKFETLFWETPYYEYVTKQNLEDKEFS.

E76 is a binding site for 4-amino-5-hydroxymethyl-2-methylpyrimidine.

This sequence in the N-terminal section; belongs to the ThiD family. The protein in the C-terminal section; belongs to the thiaminase-2 family.

It is found in the cytoplasm. The enzyme catalyses 4-amino-5-hydroxymethyl-2-methylpyrimidine + ATP = 4-amino-2-methyl-5-(phosphooxymethyl)pyrimidine + ADP + H(+). The catalysed reaction is 4-amino-2-methyl-5-(phosphooxymethyl)pyrimidine + ATP = 4-amino-2-methyl-5-(diphosphooxymethyl)pyrimidine + ADP. It functions in the pathway cofactor biosynthesis; thiamine diphosphate biosynthesis; 4-amino-2-methyl-5-diphosphomethylpyrimidine from 5-amino-1-(5-phospho-D-ribosyl)imidazole: step 2/3. The protein operates within cofactor biosynthesis; thiamine diphosphate biosynthesis; 4-amino-2-methyl-5-diphosphomethylpyrimidine from 5-amino-1-(5-phospho-D-ribosyl)imidazole: step 3/3. Catalyzes the phosphorylation of hydroxymethylpyrimidine phosphate (HMP-P) to HMP-PP, and of HMP to HMP-P. This Schizosaccharomyces pombe (strain 972 / ATCC 24843) (Fission yeast) protein is Putative hydroxymethylpyrimidine/phosphomethylpyrimidine kinase 2.